Reading from the N-terminus, the 229-residue chain is Lytic polysaccharide monooxygenase-like protein ham-7 (229 aa).

The first 17 residues, 1–17, serve as a signal peptide directing secretion; that stretch reads MLTSTLLALASAALASA. His18 serves as a coordination point for Cu(2+). Intrachain disulfides connect Cys47–Cys157 and Cys122–Cys178. Residues Asn55, Asn98, Asn139, Asn174, and Asn180 are each glycosylated (N-linked (GlcNAc...) asparagine). The GPI-anchor amidated serine moiety is linked to residue Ser206. A propeptide spans 207 to 229 (removed in mature form); the sequence is AAASLARMAGWVPLVAGGLWLML.

Belongs to the X325 family. The cofactor is Cu(2+).

The protein resides in the cell membrane. Its function is as follows. Lytic polysaccharide monooxygenase-like protein that has diverged to biological functions other than polysaccharide degradation since it does not perform oxidative cleavage of polysaccharides. Acts as the major cell wall sensor that regulates MAK-1-dependent hyphal anastomosis, the fusion of hyphal cells. May also act as a cell surface-bound protein that functions in the copper-accumulation pathway. The protein is Lytic polysaccharide monooxygenase-like protein ham-7 of Neurospora crassa (strain ATCC 24698 / 74-OR23-1A / CBS 708.71 / DSM 1257 / FGSC 987).